The following is a 61-amino-acid chain: Small ribosomal subunit protein uS14 (61 aa).

Zn(2+)-binding residues include Cys24, Cys27, Cys40, and Cys43.

It belongs to the universal ribosomal protein uS14 family. Zinc-binding uS14 subfamily. Part of the 30S ribosomal subunit. Contacts proteins S3 and S10. The cofactor is Zn(2+).

Functionally, binds 16S rRNA, required for the assembly of 30S particles and may also be responsible for determining the conformation of the 16S rRNA at the A site. This chain is Small ribosomal subunit protein uS14, found in Clostridium beijerinckii (strain ATCC 51743 / NCIMB 8052) (Clostridium acetobutylicum).